The sequence spans 253 residues: Sulfoacetaldehyde reductase (253 aa).

6-30 (FITGATSGFGRAAAHRFAAAGWSLV) is an NADP(+) binding site. Residue Ser139 coordinates substrate. Residue Tyr152 is the Proton acceptor of the active site.

It belongs to the short-chain dehydrogenases/reductases (SDR) family. In terms of assembly, homodimer and heterotetramer.

The enzyme catalyses 2-hydroxyethane-1-sulfonate + NADP(+) = sulfoacetaldehyde + NADPH + H(+). It functions in the pathway organosulfur degradation. Functionally, catalyzes the formation of isethionate from 2-sulfoacetaldehyde in the deaminative pathway of taurine. The enzyme is specific for NADPH; NADH is not a substrate. Responsible for most of the activity observed in taurine-grown cells. The chain is Sulfoacetaldehyde reductase (isfD) from Chromohalobacter salexigens (strain ATCC BAA-138 / DSM 3043 / CIP 106854 / NCIMB 13768 / 1H11).